The primary structure comprises 181 residues: MFTMVNGFRNYSEQAIQAARYIGQGFMVTLDHMNRLPMTIQYPYEKLIPSERFRGRIHFEFDKCIACEVCVRVCPINLPVVDWELKKDVKKKQLKSYSIDFGVCIFCGNCVEYCPTNCLSMTEEYELSIYDRHDLNYDQIALGRLPISVIEDSTIKTISNLSYLSKGSIEGHSNSRNVTNF.

4Fe-4S ferredoxin-type domains are found at residues 55 to 84 (GRIHFEFDKCIACEVCVRVCPINLPVVDWE) and 95 to 124 (KSYSIDFGVCIFCGNCVEYCPTNCLSMTEE). Positions 64, 67, 70, 74, 104, 107, 110, and 114 each coordinate [4Fe-4S] cluster.

Belongs to the complex I 23 kDa subunit family. As to quaternary structure, NDH is composed of at least 16 different subunits, 5 of which are encoded in the nucleus. [4Fe-4S] cluster is required as a cofactor.

Its subcellular location is the plastid. It is found in the chloroplast thylakoid membrane. The enzyme catalyses a plastoquinone + NADH + (n+1) H(+)(in) = a plastoquinol + NAD(+) + n H(+)(out). The catalysed reaction is a plastoquinone + NADPH + (n+1) H(+)(in) = a plastoquinol + NADP(+) + n H(+)(out). In terms of biological role, NDH shuttles electrons from NAD(P)H:plastoquinone, via FMN and iron-sulfur (Fe-S) centers, to quinones in the photosynthetic chain and possibly in a chloroplast respiratory chain. The immediate electron acceptor for the enzyme in this species is believed to be plastoquinone. Couples the redox reaction to proton translocation, and thus conserves the redox energy in a proton gradient. The polypeptide is NAD(P)H-quinone oxidoreductase subunit I, chloroplastic (Physcomitrium patens (Spreading-leaved earth moss)).